We begin with the raw amino-acid sequence, 179 residues long: UPF0134 protein MPN_145 (179 aa).

This sequence belongs to the UPF0134 family.

In Mycoplasma pneumoniae (strain ATCC 29342 / M129 / Subtype 1) (Mycoplasmoides pneumoniae), this protein is UPF0134 protein MPN_145.